A 540-amino-acid chain; its full sequence is H(+)/hexose cotransporter 2 (540 aa).

At 1 to 29 (MAGGGPVASTTTNRASQYGYARGGLNWYI) the chain is on the cytoplasmic side. A helical membrane pass occupies residues 30 to 50 (FIVALTAGSGGLLFGYDIGVT). Topologically, residues 51 to 90 (GGVTSMPEFLQKFFPSIYDRTQQPSDSKDPYCTYDDQKLQ) are extracellular. Residues 91-111 (LFTSSFFLAGMFVSFFAGSVV) form a helical membrane-spanning segment. Residues 112–124 (RRWGRKPTMLIAS) are Cytoplasmic-facing. The chain crosses the membrane as a helical span at residues 125–135 (VLFLAGAGLNA). Topologically, residues 136-147 (GAQDLAMLVIGR) are extracellular. A helical membrane pass occupies residues 148-168 (VLLGFGVGGGNNAVPLYLSEC). Residues 169–176 (APPKYRGG) are Cytoplasmic-facing. The helical transmembrane segment at 177-197 (LNMMFQLAVTIGIIVAQLVNY) threads the bilayer. Residues 198–207 (GTQTMNNGWR) lie on the Extracellular side of the membrane. Residues 208–228 (LSLGLAGVPAIILLIGSLLLP) traverse the membrane as a helical segment. Over 229 to 296 (ETPNSLIERG…YSPMLIVTSL (68 aa)) the chain is Cytoplasmic. Residues 297–317 (IAMLQQLTGINAIMFYVPVLF) traverse the membrane as a helical segment. Residues 318 to 326 (SSFGTARHA) lie on the Extracellular side of the membrane. The chain crosses the membrane as a helical span at residues 327-337 (ALLNTVIIGAV). Residues 338–355 (NVAATFVSIFSVDKFGRR) lie on the Cytoplasmic side of the membrane. Residues 356–376 (GLFLEGGIQMFIGQVVTAAVL) form a helical membrane-spanning segment. The Extracellular segment spans residues 377–396 (GVELNKYGTNLPSSTAAGVL). Residues 397-417 (VVICVYVAAFAWSWGPLGWLV) traverse the membrane as a helical segment. The Cytoplasmic portion of the chain corresponds to 418-435 (PSEIQTLETRGAGMSMAV). Residues 436–456 (IVNFLFSFVIGQAFLSMMCAM) form a helical membrane-spanning segment. Residues 457-458 (RW) are Extracellular-facing. Residues 459–479 (GVFLFFAGWVVIMTFFVYFCL) form a helical membrane-spanning segment. Residues 480-540 (PETKGVPVET…SEDGKPASDQ (61 aa)) lie on the Cytoplasmic side of the membrane.

This sequence belongs to the major facilitator superfamily. Sugar transporter (TC 2.A.1.1) family.

The protein resides in the membrane. Functionally, active uptake of galactose. The polypeptide is H(+)/hexose cotransporter 2 (HUP2) (Parachlorella kessleri (Green alga)).